The chain runs to 468 residues: Probable citrate synthase, mitochondrial (468 aa).

Active-site residues include His-303, His-349, and Asp-404.

Belongs to the citrate synthase family. As to quaternary structure, homodimer.

It is found in the mitochondrion matrix. The catalysed reaction is oxaloacetate + acetyl-CoA + H2O = citrate + CoA + H(+). It participates in carbohydrate metabolism; tricarboxylic acid cycle; isocitrate from oxaloacetate: step 1/2. The polypeptide is Probable citrate synthase, mitochondrial (cts-1) (Caenorhabditis briggsae).